Consider the following 346-residue polypeptide: Cyclin-dependent kinase 20 (346 aa).

Residues 4-288 (YCILGRIGEG…ASQALLHQYF (285 aa)) enclose the Protein kinase domain. ATP contacts are provided by residues 10 to 18 (IGEGAHGIV) and Lys-33. Residue Asp-127 is the Proton acceptor of the active site. Residues 298–324 (SELPIPQRPGGPTPKAHPGPPHVHDFH) form a disordered region. The span at 303–318 (PQRPGGPTPKAHPGPP) shows a compositional bias: pro residues.

The protein belongs to the protein kinase superfamily. CMGC Ser/Thr protein kinase family. CDC2/CDKX subfamily. As to quaternary structure, monomer. Interacts with TBC1D32 and MAK.

Its subcellular location is the nucleus. It localises to the cytoplasm. The protein resides in the cell projection. It is found in the cilium. It catalyses the reaction L-seryl-[protein] + ATP = O-phospho-L-seryl-[protein] + ADP + H(+). The catalysed reaction is L-threonyl-[protein] + ATP = O-phospho-L-threonyl-[protein] + ADP + H(+). In terms of biological role, required for high-level Shh responses in the developing neural tube. Together with TBC1D32, controls the structure of the primary cilium by coordinating assembly of the ciliary membrane and axoneme, allowing GLI2 to be properly activated in response to SHH signaling. Involved in cell growth. Activates CDK2, a kinase involved in the control of the cell cycle, by phosphorylating residue 'Thr-160'. The chain is Cyclin-dependent kinase 20 (Cdk20) from Rattus norvegicus (Rat).